The chain runs to 225 residues: C-type lectin domain-containing protein 91 (225 aa).

An N-terminal signal peptide occupies residues 1–21 (MRSTYILIIVPLIIIGGGVVA). Positions 85-215 (YSDSCYFIET…CTMAFKSICE (131 aa)) constitute a C-type lectin domain. 2 cysteine pairs are disulfide-bonded: C106-C214 and C185-C206. A glycan (N-linked (GlcNAc...) asparagine) is linked at N217.

Its subcellular location is the secreted. This is C-type lectin domain-containing protein 91 (clec-91) from Caenorhabditis elegans.